The sequence spans 427 residues: Peptidase B (427 aa).

Positions 195 and 200 each coordinate Mn(2+). Lys-207 is an active-site residue. Residues Asp-218, Asp-277, and Glu-279 each coordinate Mn(2+). Residue Arg-281 is part of the active site.

This sequence belongs to the peptidase M17 family. As to quaternary structure, homohexamer. Requires Mn(2+) as cofactor.

The protein resides in the cytoplasm. It carries out the reaction Release of an N-terminal amino acid, Xaa, from a peptide or arylamide. Xaa is preferably Glu or Asp but may be other amino acids, including Leu, Met, His, Cys and Gln.. Probably plays an important role in intracellular peptide degradation. This chain is Peptidase B, found in Escherichia coli O7:K1 (strain IAI39 / ExPEC).